The sequence spans 406 residues: RILP-like protein 1 (406 aa).

The residue at position 7 (S7) is a Phosphoserine. The region spanning 10 to 97 (AALSALEKNV…RVERMDRIEK (88 aa)) is the RH1 domain. An S-nitrosocysteine modification is found at C47. A coiled-coil region spans residues 76-258 (ELDELRLELD…KLRERLQGEH (183 aa)). 2 disordered regions span residues 255-280 (QGEH…ESIS) and 330-354 (EIEE…QPES). The residue at position 259 (S259) is a Phosphoserine. A compositionally biased stretch (acidic residues) spans 262–280 (GEEEEAEIPPQPDGEESIS). The RH2 domain maps to 294 to 359 (RPRFTLQELR…PQPESGIKRL (66 aa)).

It belongs to the RILPL family. In terms of assembly, interacts (when S-nitrosylated) with GAPDH. Interacts with RAB8A; interaction is dependent on the phosphorylation of 'Thr-72' of RAB8A. Interacts with RAB10 and RAB12; the interaction is dependent on the phosphorylation of 'Thr-73' of RAB10, and 'Ser-105' of RAB12. Post-translationally, S-nitrosylation is required for the interaction with GAPDH. As to expression, highly expressed in heart, skeletal muscle, brain and lung (at protein level).

The protein resides in the cytoplasm. The protein localises to the cytosol. It is found in the cytoskeleton. It localises to the microtubule organizing center. Its subcellular location is the centrosome. The protein resides in the centriole. The protein localises to the cilium basal body. Its function is as follows. Plays a role in the regulation of cell shape and polarity. Plays a role in cellular protein transport, including protein transport away from primary cilia. Neuroprotective protein, which acts by sequestring GAPDH in the cytosol and prevent the apoptotic function of GAPDH in the nucleus. Competes with SIAH1 for binding GAPDH. Does not regulate lysosomal morphology and distribution. Binds to RAB10 following LRRK2-mediated RAB10 phosphorylation which leads to inhibition of ciliogenesis. This Rattus norvegicus (Rat) protein is RILP-like protein 1 (Rilpl1).